Consider the following 310-residue polypeptide: Ribosomal RNA small subunit methyltransferase H (310 aa).

Residues 33-35 (AGH), aspartate 53, phenylalanine 79, aspartate 100, and glutamine 107 each bind S-adenosyl-L-methionine.

Belongs to the methyltransferase superfamily. RsmH family.

It is found in the cytoplasm. It catalyses the reaction cytidine(1402) in 16S rRNA + S-adenosyl-L-methionine = N(4)-methylcytidine(1402) in 16S rRNA + S-adenosyl-L-homocysteine + H(+). Functionally, specifically methylates the N4 position of cytidine in position 1402 (C1402) of 16S rRNA. This Clostridium perfringens (strain 13 / Type A) protein is Ribosomal RNA small subunit methyltransferase H.